The chain runs to 639 residues: 3-oxocholoyl-CoA 4-desaturase (639 aa).

Glutamine 101 is an FMN binding site. 155-158 (HAAH) provides a ligand contact to substrate. Residue tyrosine 160 is the Proton donor of the active site. FMN is bound by residues arginine 208, arginine 286, and 308–309 (GR). Residues cysteine 332 and cysteine 335 each coordinate [4Fe-4S] cluster. Glutamine 337 is an FAD binding site. 2 residues coordinate [4Fe-4S] cluster: cysteine 339 and cysteine 353. 5 residues coordinate FAD: alanine 383, glutamate 402, glutamine 410, lysine 420, and valine 447.

In the N-terminal section; belongs to the NADH:flavin oxidoreductase/NADH oxidase family. It depends on FMN as a cofactor. The cofactor is FAD. [4Fe-4S] cluster is required as a cofactor.

It catalyses the reaction 7alpha,12alpha-dihydroxy-3-oxochol-24-oyl-CoA + NAD(+) = 7alpha,12alpha-dihydroxy-3-oxochol-4-en-24-oyl-CoA + NADH + H(+). The enzyme catalyses 7alpha-hydroxy-3-oxochol-24-oyl-CoA + NAD(+) = 7alpha-hydroxy-3-oxochol-4-en-24-oyl-CoA + NADH + H(+). Its pathway is lipid metabolism; bile acid degradation. Its function is as follows. Stereo-specific NAD(H)-dependent 3-oxo-delta4-cholenoic acid oxidoreductase involved in bile acid 7alpha-dehydroxylation. In Clostridium scindens (strain JCM 10418 / VPI 12708), this protein is 3-oxocholoyl-CoA 4-desaturase.